Reading from the N-terminus, the 418-residue chain is Serine--tRNA ligase (418 aa).

231–233 lines the L-serine pocket; sequence TAE. 262-264 contacts ATP; that stretch reads RSE. Position 285 (E285) interacts with L-serine. 349–352 serves as a coordination point for ATP; sequence EISS. Residue S385 participates in L-serine binding.

It belongs to the class-II aminoacyl-tRNA synthetase family. Type-1 seryl-tRNA synthetase subfamily. Homodimer. The tRNA molecule binds across the dimer.

It localises to the cytoplasm. It carries out the reaction tRNA(Ser) + L-serine + ATP = L-seryl-tRNA(Ser) + AMP + diphosphate + H(+). It catalyses the reaction tRNA(Sec) + L-serine + ATP = L-seryl-tRNA(Sec) + AMP + diphosphate + H(+). Its pathway is aminoacyl-tRNA biosynthesis; selenocysteinyl-tRNA(Sec) biosynthesis; L-seryl-tRNA(Sec) from L-serine and tRNA(Sec): step 1/1. Catalyzes the attachment of serine to tRNA(Ser). Is also able to aminoacylate tRNA(Sec) with serine, to form the misacylated tRNA L-seryl-tRNA(Sec), which will be further converted into selenocysteinyl-tRNA(Sec). This chain is Serine--tRNA ligase, found in Ureaplasma parvum serovar 3 (strain ATCC 27815 / 27 / NCTC 11736).